Consider the following 627-residue polypeptide: Chaperone protein HtpG (627 aa).

An a; substrate-binding region spans residues 1–339 (MKGQETRGFQ…SNDLPLNVSR (339 aa)). Positions 340-555 (EILQDSRVTQ…ADEMSTQMAK (216 aa)) are b. A c region spans residues 556–627 (LFAAAGQQAP…IRRMNQLLSA (72 aa)).

Belongs to the heat shock protein 90 family. Homodimer.

Its subcellular location is the cytoplasm. Molecular chaperone. Has ATPase activity. The polypeptide is Chaperone protein HtpG (Pectobacterium atrosepticum (strain SCRI 1043 / ATCC BAA-672) (Erwinia carotovora subsp. atroseptica)).